Consider the following 122-residue polypeptide: MIQQESRLKVADNTGAKEILCIRVLGGSGRRYAGIGDVIVATVKDAIPGGNVKKGDVVKAVIVRTKKERRRADGSYIRFDENAAVILRADGDPRGTRIFGPVGRELREKKFMRIISLAPEVL.

Belongs to the universal ribosomal protein uL14 family. Part of the 50S ribosomal subunit. Forms a cluster with proteins L3 and L19. In the 70S ribosome, L14 and L19 interact and together make contacts with the 16S rRNA in bridges B5 and B8.

Its function is as follows. Binds to 23S rRNA. Forms part of two intersubunit bridges in the 70S ribosome. The protein is Large ribosomal subunit protein uL14 of Kineococcus radiotolerans (strain ATCC BAA-149 / DSM 14245 / SRS30216).